The chain runs to 809 residues: Sucrose synthase 2 (809 aa).

A GT-B glycosyltransferase region spans residues 278–756 (MVFNVVILSP…GLQRIYERYT (479 aa)).

The protein belongs to the glycosyltransferase 1 family. Plant sucrose synthase subfamily.

The catalysed reaction is an NDP-alpha-D-glucose + D-fructose = a ribonucleoside 5'-diphosphate + sucrose + H(+). Functionally, sucrose-cleaving enzyme that provides UDP-glucose and fructose for various metabolic pathways. This is Sucrose synthase 2 (SUS2) from Pisum sativum (Garden pea).